The sequence spans 364 residues: Dihydroorotate dehydrogenase (quinone) (364 aa).

Residues 61–65 (AGFDK) and Ser-85 contribute to the FMN site. Position 65 (Lys-65) interacts with substrate. A substrate-binding site is contributed by 110-114 (NRMGF). Asn-139 and Asn-170 together coordinate FMN. Residue Asn-170 coordinates substrate. Ser-173 functions as the Nucleophile in the catalytic mechanism. Asn-175 is a substrate binding site. Residues Lys-214 and Ser-242 each coordinate FMN. 243 to 244 (NT) is a substrate binding site. Residues Gly-266, Gly-295, and 316–317 (YS) each bind FMN.

This sequence belongs to the dihydroorotate dehydrogenase family. Type 2 subfamily. As to quaternary structure, monomer. Requires FMN as cofactor.

It is found in the cell membrane. It catalyses the reaction (S)-dihydroorotate + a quinone = orotate + a quinol. The protein operates within pyrimidine metabolism; UMP biosynthesis via de novo pathway; orotate from (S)-dihydroorotate (quinone route): step 1/1. Functionally, catalyzes the conversion of dihydroorotate to orotate with quinone as electron acceptor. This is Dihydroorotate dehydrogenase (quinone) from Bradyrhizobium sp. (strain BTAi1 / ATCC BAA-1182).